We begin with the raw amino-acid sequence, 501 residues long: Glucose-6-phosphate isomerase (501 aa).

The segment at 78 to 101 (GIANPTENRAAEHSAERGDGAPES) is disordered. Positions 86 to 97 (RAAEHSAERGDG) are enriched in basic and acidic residues. Catalysis depends on Glu333, which acts as the Proton donor. Residues His364 and Lys474 contribute to the active site.

It belongs to the GPI family.

The protein localises to the cytoplasm. It catalyses the reaction alpha-D-glucose 6-phosphate = beta-D-fructose 6-phosphate. Its pathway is carbohydrate biosynthesis; gluconeogenesis. The protein operates within carbohydrate degradation; glycolysis; D-glyceraldehyde 3-phosphate and glycerone phosphate from D-glucose: step 2/4. In terms of biological role, catalyzes the reversible isomerization of glucose-6-phosphate to fructose-6-phosphate. In Sphingopyxis alaskensis (strain DSM 13593 / LMG 18877 / RB2256) (Sphingomonas alaskensis), this protein is Glucose-6-phosphate isomerase.